Reading from the N-terminus, the 114-residue chain is Large ribosomal subunit protein uL22 (114 aa).

It belongs to the universal ribosomal protein uL22 family. As to quaternary structure, part of the 50S ribosomal subunit.

In terms of biological role, this protein binds specifically to 23S rRNA; its binding is stimulated by other ribosomal proteins, e.g. L4, L17, and L20. It is important during the early stages of 50S assembly. It makes multiple contacts with different domains of the 23S rRNA in the assembled 50S subunit and ribosome. Its function is as follows. The globular domain of the protein is located near the polypeptide exit tunnel on the outside of the subunit, while an extended beta-hairpin is found that lines the wall of the exit tunnel in the center of the 70S ribosome. The chain is Large ribosomal subunit protein uL22 from Aeromonas salmonicida (strain A449).